The primary structure comprises 1453 residues: Chromatin remodeling regulator CECR2 (1453 aa).

The disordered stretch occupies residues 170 to 237 (VQGRSNGELS…DLQTRNGSRG (68 aa)). Residues 197 to 209 (TGKRRGRPPKRKK) show a composition bias toward basic residues. Residues 210–222 (LQEEIISSEKQEE) are compositionally biased toward basic and acidic residues. Polar residues predominate over residues 223 to 234 (NSLTSDLQTRNG). A Phosphoserine modification is found at serine 402. Residues 414–518 (FELDDDFTAM…RCFHRAMTKH (105 aa)) enclose the Bromo domain. Residue threonine 526 is modified to Phosphothreonine. Disordered regions lie at residues 536–667 (EKRE…HPPF), 767–796 (HGTT…TLGH), 827–868 (GYMQ…GESM), 884–1020 (VCPP…DNSY), 1046–1072 (VVGE…LCPR), 1131–1308 (LASM…YLYG), 1331–1368 (MLQT…VATQ), and 1396–1453 (QTGT…LDQS). The residue at position 551 (serine 551) is a Phosphoserine. Residues 637–649 (GSLQGSDPTNLHG) show a composition bias toward polar residues. A compositionally biased stretch (pro residues) spans 655-664 (EAPPGEPLQH). A compositionally biased stretch (pro residues) spans 887 to 905 (PGVPYHPRQPTPPQLPGPF). A Phosphoserine modification is found at serine 983. Over residues 985-998 (QERETEDSQLKSDA) the composition is skewed to basic and acidic residues. Positions 999–1020 (SDSADTYKTSKNKNTWPLDNSY) are enriched in polar residues. An asymmetric dimethylarginine mark is found at arginine 1166 and arginine 1172. 2 stretches are compositionally biased toward low complexity: residues 1173-1187 (YSYQ…HPYQ) and 1202-1211 (QRSLPSQRSP). Polar residues predominate over residues 1228–1250 (NVLSSLQGCETLNTALTSPTQMD). Basic and acidic residues predominate over residues 1265-1289 (GPEEEKMDESVERPESPKEFLDLDN). Phosphoserine is present on serine 1280. 2 stretches are compositionally biased toward polar residues: residues 1291 to 1304 (NAAT…STSD) and 1331 to 1346 (MLQT…SASH). Residues 1352 to 1364 (YPSPVPAHPPPHP) show a composition bias toward pro residues.

In terms of assembly, component of the CERF-1 ISWI chromatin remodeling complex (also called the CECR2-containing remodeling factor (CERF) complex) at least composed of CECR2 and SMARCA1. Component of the CERF-5 ISWI chromatin remodeling complex at least composed of CECR2 and SMARCA5/SNF2H. LUZP1 is detected as part of the CERF-1 and CERF-5 complexes in embryonic stem (ES) cells where it is involved in complex stabilization but is not detected in the complexes in the testis. Interacts with CCAR2; CCAR2 may form part of the CERF-1 and/or CEF-5 ISWI chromatin remodeling complexes in ES cells. Interacts with acetylated lysine residues on histone H2A and H3 (in vitro). Interacts with LRPPRC.

It is found in the nucleus. Its function is as follows. Regulatory subunit of the ATP-dependent CERF-1 and CERF-5 ISWI chromatin remodeling complexes, which form ordered nucleosome arrays on chromatin and facilitate access to DNA during DNA-templated processes such as DNA replication, transcription, and repair. The complexes do not have the ability to slide mononucleosomes to the center of a DNA template. The CERF-1 ISWI chromatin remodeling complex has a lower ATP hydrolysis rate than the CERF-5 ISWI chromatin remodeling complex. Plays a role in various processes during development: required during embryogenesis for neural tube closure and inner ear development. In adults, required for spermatogenesis, via the formation of ISWI-type chromatin complexes. In histone-modifying complexes, CECR2 recognizes and binds acylated histones: binds histones that are acetylated and/or butyrylated. May also be involved through its interaction with LRPPRC in the integration of cytoskeletal network with vesicular trafficking, nucleocytosolic shuttling, transcription, chromosome remodeling and cytokinesis. The protein is Chromatin remodeling regulator CECR2 of Mus musculus (Mouse).